The sequence spans 366 residues: Transcription factor bHLH74 (366 aa).

Residues 1–11 (MGGESNEGGEM) are compositionally biased toward gly residues. Disordered regions lie at residues 1–20 (MGGE…DDES) and 123–201 (GESS…APKE). 2 stretches are compositionally biased toward basic and acidic residues: residues 123 to 134 (GESSHEDHHQVS) and 159 to 170 (KAVEEFQEDPQR). The bHLH domain maps to 212–262 (QATNSHSLAERVRREKISERMRLLQELVPGCNKITGKAVMLDEIINYVQSL).

In terms of assembly, homodimer. Interacts with IBH1. Binds reversibly to CRY2 after blue light illumination. Expressed constitutively in roots, leaves, stems, and flowers.

The protein localises to the nucleus. Transcriptional activator involved in cell elongation. Regulates the expression of a subset of genes involved in cell expansion by binding to the G-box motif. Binds to chromatin DNA of the FT gene and promotes its expression, and thus triggers flowering in response to blue light. This is Transcription factor bHLH74 (BHLH74) from Arabidopsis thaliana (Mouse-ear cress).